Consider the following 389-residue polypeptide: 8-amino-7-oxononanoate synthase (389 aa).

Arg19 is a substrate binding site. Gly106–Tyr107 contributes to the pyridoxal 5'-phosphate binding site. Residue His131 coordinates substrate. Ser176, His204, and Thr233 together coordinate pyridoxal 5'-phosphate. Residue Lys236 is modified to N6-(pyridoxal phosphate)lysine. Position 350 (Thr350) interacts with substrate.

Belongs to the class-II pyridoxal-phosphate-dependent aminotransferase family. BioF subfamily. Homodimer. The cofactor is pyridoxal 5'-phosphate.

The catalysed reaction is 6-carboxyhexanoyl-[ACP] + L-alanine + H(+) = (8S)-8-amino-7-oxononanoate + holo-[ACP] + CO2. It functions in the pathway cofactor biosynthesis; biotin biosynthesis. Its function is as follows. Catalyzes the decarboxylative condensation of pimeloyl-[acyl-carrier protein] and L-alanine to produce 8-amino-7-oxononanoate (AON), [acyl-carrier protein], and carbon dioxide. In Ectopseudomonas mendocina (strain ymp) (Pseudomonas mendocina), this protein is 8-amino-7-oxononanoate synthase.